The primary structure comprises 159 residues: NADH-quinone oxidoreductase subunit B (159 aa).

The [4Fe-4S] cluster site is built by cysteine 32, cysteine 33, cysteine 97, and cysteine 126.

The protein belongs to the complex I 20 kDa subunit family. As to quaternary structure, NDH-1 is composed of 14 different subunits. Subunits NuoB, C, D, E, F, and G constitute the peripheral sector of the complex. [4Fe-4S] cluster is required as a cofactor.

Its subcellular location is the cell inner membrane. It catalyses the reaction a quinone + NADH + 5 H(+)(in) = a quinol + NAD(+) + 4 H(+)(out). Functionally, NDH-1 shuttles electrons from NADH, via FMN and iron-sulfur (Fe-S) centers, to quinones in the respiratory chain. The immediate electron acceptor for the enzyme in this species is believed to be ubiquinone. Couples the redox reaction to proton translocation (for every two electrons transferred, four hydrogen ions are translocated across the cytoplasmic membrane), and thus conserves the redox energy in a proton gradient. This Helicobacter pylori (strain J99 / ATCC 700824) (Campylobacter pylori J99) protein is NADH-quinone oxidoreductase subunit B.